A 373-amino-acid chain; its full sequence is Peptide chain release factor subunit 1 (373 aa).

The protein belongs to the eukaryotic release factor 1 family. Heterodimer of two subunits, one of which binds GTP.

The protein resides in the cytoplasm. In terms of biological role, directs the termination of nascent peptide synthesis (translation) in response to the termination codons UAA, UAG and UGA. The sequence is that of Peptide chain release factor subunit 1 (prf1) from Aeropyrum pernix (strain ATCC 700893 / DSM 11879 / JCM 9820 / NBRC 100138 / K1).